The chain runs to 116 residues: MNMITFMLLLSLTLSIILTTINFWLAQMNPDAEKLSPYECGFDPLGSARLPFSIRFFLVAILFLLFDLEIALLLPLPWAIQLSQPLLTLLWTSILLLLLTLGLVYEWIQGGLEWAE.

3 helical membrane-spanning segments follow: residues 6–26, 56–76, and 85–105; these read FMLLLSLTLSIILTTINFWLA, FFLVAILFLLFDLEIALLLPL, and PLLTLLWTSILLLLLTLGLVY.

It belongs to the complex I subunit 3 family.

Its subcellular location is the mitochondrion membrane. The enzyme catalyses a ubiquinone + NADH + 5 H(+)(in) = a ubiquinol + NAD(+) + 4 H(+)(out). In terms of biological role, core subunit of the mitochondrial membrane respiratory chain NADH dehydrogenase (Complex I) that is believed to belong to the minimal assembly required for catalysis. Complex I functions in the transfer of electrons from NADH to the respiratory chain. The immediate electron acceptor for the enzyme is believed to be ubiquinone. The sequence is that of NADH-ubiquinone oxidoreductase chain 3 (MT-ND3) from Struthio camelus (Common ostrich).